Consider the following 265-residue polypeptide: MRHLITISQPAIPQDVTNKDGHKAKKQLRCKGIYPFLWMFFFAAALPLQATQPIEVTRFHKSDMATTGIVNIMPHDPTLRNTLEYQRYTASIARNLTRIGFQVTDNPQQAEYTMMYDVMRGTHYRDNGQTPPRDTRPHGGISLGGGYGGGGGFGGGGVGWGGGGSGISIGGGGGGGRGFGGGGGGISAGISVPVGNGYHTSNKVETILTAQLSRRDTHQAIWEGRARTEAKSNKAESTPDIAVDRLATAMFGQFPGESGETEKVK.

The interval 122 to 145 (THYRDNGQTPPRDTRPHGGISLGG) is disordered.

This is an uncharacterized protein from Zymomonas mobilis subsp. mobilis (strain ATCC 31821 / ZM4 / CP4).